Consider the following 340-residue polypeptide: DNA repair protein RAD51 homolog B (340 aa).

A disordered region spans residues 1 to 22 (MSSSSAHQKASPPIEEEATEHG). A HhH domain is found at 49–78 (TVESVAYSPRKDLLQIKGISEAKVDKIIEA). Residue 128 to 135 (GEFRSGKT) coordinates ATP.

Belongs to the RecA family. RAD51 subfamily. As to quaternary structure, self-associates and may interact with XRCC3 homolog. As to expression, highly expressed in mitotic and meiotic tissues, but low levels in differentiated tissues.

It localises to the nucleus. Binds to single and double-stranded DNA and exhibits DNA-dependent ATPase activity. Unwinds duplex DNA. Component of the meiotic recombination pathway. Seems to play a role in mediating chromosome homology search, chromosome pairing and synapsis at early stages and probably chromosome crossing-over at later stages in meiosis. Probably is involved in the repair of meiotic double strand breaks (DBSs) and in homologous recombination. The sequence is that of DNA repair protein RAD51 homolog B (RAD51B) from Zea mays (Maize).